A 356-amino-acid chain; its full sequence is Pyruvate dehydrogenase E1 component subunit beta, mitochondrial (356 aa).

The N-terminal 25 residues, 1 to 25, are a transit peptide targeting the mitochondrion; the sequence is MLSSILKKIQPSLLVNFRIITRTYA. Glu-85 lines the thiamine diphosphate pocket. Residues Ile-138, Ala-186, Ile-187, Asp-189, and Asn-191 each contribute to the K(+) site.

In terms of assembly, tetramer of 2 alpha and 2 beta subunits. It depends on thiamine diphosphate as a cofactor.

It localises to the mitochondrion matrix. The enzyme catalyses N(6)-[(R)-lipoyl]-L-lysyl-[protein] + pyruvate + H(+) = N(6)-[(R)-S(8)-acetyldihydrolipoyl]-L-lysyl-[protein] + CO2. The pyruvate dehydrogenase complex catalyzes the overall conversion of pyruvate to acetyl-CoA and CO(2). It contains multiple copies of three enzymatic components: pyruvate dehydrogenase (E1), dihydrolipoamide acetyltransferase (E2) and lipoamide dehydrogenase (E3). The protein is Pyruvate dehydrogenase E1 component subunit beta, mitochondrial (pdhB) of Dictyostelium discoideum (Social amoeba).